Consider the following 61-residue polypeptide: UPF0370 protein Spro_3503 (61 aa).

A helical transmembrane segment spans residues 3–23 (WLADYWWIILLILVGMIISGI). Basic and acidic residues predominate over residues 38–48 (KPELPPHRDNN). The tract at residues 38-61 (KPELPPHRDNNAEWDDDDDWPKKK) is disordered. Acidic residues predominate over residues 49–61 (AEWDDDDDWPKKK).

This sequence belongs to the UPF0370 family.

Its subcellular location is the cell membrane. The sequence is that of UPF0370 protein Spro_3503 from Serratia proteamaculans (strain 568).